The primary structure comprises 248 residues: Probable transcriptional regulatory protein BBta_6910 (248 aa).

It belongs to the TACO1 family.

The protein localises to the cytoplasm. This chain is Probable transcriptional regulatory protein BBta_6910, found in Bradyrhizobium sp. (strain BTAi1 / ATCC BAA-1182).